Reading from the N-terminus, the 85-residue chain is MAHKKAGGSTRNGRDSEAKRLGVKRFGGESVLAGSIIVRQRGTKFHAGNNVGCGRDHTLFAKADGKVKFEVKGPNNRKYISIVAE.

The interval 1–20 is disordered; the sequence is MAHKKAGGSTRNGRDSEAKR.

It belongs to the bacterial ribosomal protein bL27 family.

The polypeptide is Large ribosomal subunit protein bL27 (Cronobacter sakazakii (strain ATCC BAA-894) (Enterobacter sakazakii)).